The primary structure comprises 132 residues: U10-hexatoxin-Hi1a (132 aa).

A signal peptide spans 1-20; sequence MKGFIVFSLSLCLVFTVCLA. A propeptide spanning residues 21–30 is cleaved from the precursor; that stretch reads EDELMKEAVR.

Post-translationally, contains 5 disulfide bonds. Expressed by the venom gland.

Its subcellular location is the secreted. In terms of biological role, probable ion channel inhibitor. In Hadronyche infensa (Fraser island funnel-web spider), this protein is U10-hexatoxin-Hi1a.